Reading from the N-terminus, the 122-residue chain is Ribonuclease P protein component (122 aa).

Belongs to the RnpA family. In terms of assembly, consists of a catalytic RNA component (M1 or rnpB) and a protein subunit.

It carries out the reaction Endonucleolytic cleavage of RNA, removing 5'-extranucleotides from tRNA precursor.. RNaseP catalyzes the removal of the 5'-leader sequence from pre-tRNA to produce the mature 5'-terminus. It can also cleave other RNA substrates such as 4.5S RNA. The protein component plays an auxiliary but essential role in vivo by binding to the 5'-leader sequence and broadening the substrate specificity of the ribozyme. This is Ribonuclease P protein component from Lactobacillus johnsonii (strain CNCM I-12250 / La1 / NCC 533).